A 111-amino-acid polypeptide reads, in one-letter code: WAP four-disulfide core domain protein 12 (111 aa).

The first 23 residues, 1-23, serve as a signal peptide directing secretion; sequence MGSSSFLVLTVSLALVTLVAAEG. The WAP domain occupies 27-74; it reads GIEKAGVCPADNVRCFKSDPPQCHTDQDCLGARKCCYLHCGFKCVIPV. 4 disulfides stabilise this stretch: C34-C62, C41-C66, C49-C61, and C55-C70. The disordered stretch occupies residues 80–111; it reads GGNKDEDVSGPCPEPGWEAKSPGSSSTGCPQK. Positions 101-111 are enriched in polar residues; the sequence is PGSSSTGCPQK.

It localises to the secreted. In terms of biological role, antibacterial protein. Putative acid-stable proteinase inhibitor. This is WAP four-disulfide core domain protein 12 (WFDC12) from Papio anubis (Olive baboon).